The primary structure comprises 347 residues: Phosphate acyltransferase (347 aa).

The protein belongs to the PlsX family. As to quaternary structure, homodimer. Probably interacts with PlsY.

It is found in the cytoplasm. It carries out the reaction a fatty acyl-[ACP] + phosphate = an acyl phosphate + holo-[ACP]. It functions in the pathway lipid metabolism; phospholipid metabolism. Functionally, catalyzes the reversible formation of acyl-phosphate (acyl-PO(4)) from acyl-[acyl-carrier-protein] (acyl-ACP). This enzyme utilizes acyl-ACP as fatty acyl donor, but not acyl-CoA. This chain is Phosphate acyltransferase, found in Sinorhizobium medicae (strain WSM419) (Ensifer medicae).